Consider the following 159-residue polypeptide: UPF0262 protein CCNA_02430 (159 aa).

It belongs to the UPF0262 family.

The protein is UPF0262 protein CCNA_02430 of Caulobacter vibrioides (strain NA1000 / CB15N) (Caulobacter crescentus).